Consider the following 189-residue polypeptide: dCTP deaminase (189 aa).

Residues 112–117 (KSTYAR), 136–138 (TLE), Gln-157, Tyr-171, and Gln-181 contribute to the dCTP site. The active-site Proton donor/acceptor is Glu-138.

It belongs to the dCTP deaminase family. In terms of assembly, homotrimer.

It carries out the reaction dCTP + H2O + H(+) = dUTP + NH4(+). It participates in pyrimidine metabolism; dUMP biosynthesis; dUMP from dCTP (dUTP route): step 1/2. Functionally, catalyzes the deamination of dCTP to dUTP. The chain is dCTP deaminase from Acinetobacter baylyi (strain ATCC 33305 / BD413 / ADP1).